The following is a 31-amino-acid chain: Cliotide T14 (31 aa).

The segment at residues 1 to 31 is a cross-link (cyclopeptide (Asp-Asn)); that stretch reads DTIPCGESCVWIPCISSILGCSCKDKVCYHN. 3 disulfide bridges follow: Cys-5–Cys-21, Cys-9–Cys-23, and Cys-14–Cys-28.

Post-translationally, contains 3 disulfide bonds. In terms of processing, this is a cyclic peptide. In terms of tissue distribution, expressed in seed but not in root nodules.

Its function is as follows. Probably participates in a plant defense mechanism. Not active against Gram-negative bacterium E.coli ATCC 700926 or Gram-positive bacterium S.aureus ATCC 12600 up to a concentration of 100 uM under low-salt conditions. This is Cliotide T14 from Clitoria ternatea (Butterfly pea).